The chain runs to 72 residues: SPbeta prophage-derived uncharacterized protein YopT (72 aa).

As to quaternary structure, homodimer.

The sequence is that of SPbeta prophage-derived uncharacterized protein YopT (yopT) from Bacillus subtilis (strain 168).